Here is a 315-residue protein sequence, read N- to C-terminus: T-box transcription factor tbx-8 (315 aa).

The segment at residues 11-195 (EDQDKLWNLF…FNPFAKGFRE (185 aa)) is a DNA-binding region (T-box). The span at 193 to 203 (FREGSQSDRKR) shows a compositional bias: basic and acidic residues. 2 disordered regions span residues 193–235 (FREG…SVSP) and 293–315 (PPPS…INVV). The segment covering 205 to 225 (SPSADDSTTDESSSQVSSPQP) has biased composition (low complexity). Acidic residues predominate over residues 305–315 (QEDIEQEINVV).

It is found in the nucleus. Its function is as follows. Transcription factor. Involved in the control of early morphogenesis of the intestine, hypodermis and body-wall muscle. Involved in regulating expression of vab-7. Appears to have partially redundant function to tbx-9. This chain is T-box transcription factor tbx-8 (tbx-8), found in Caenorhabditis elegans.